The following is a 451-amino-acid chain: tRNA-2-methylthio-N(6)-dimethylallyladenosine synthase (451 aa).

Residues 3-120 (KKLFIQTHGC…LPEMVNAAGK (118 aa)) form the MTTase N-terminal domain. Positions 12, 49, 83, 156, 160, and 163 each coordinate [4Fe-4S] cluster. The region spanning 142-374 (RVEGAEAFVS…QRRISQQAYD (233 aa)) is the Radical SAM core domain. Residues 377-441 (LSMVGEVQRI…PNSLLGELVG (65 aa)) enclose the TRAM domain.

The protein belongs to the methylthiotransferase family. MiaB subfamily. Monomer. The cofactor is [4Fe-4S] cluster.

The protein localises to the cytoplasm. It carries out the reaction N(6)-dimethylallyladenosine(37) in tRNA + (sulfur carrier)-SH + AH2 + 2 S-adenosyl-L-methionine = 2-methylsulfanyl-N(6)-dimethylallyladenosine(37) in tRNA + (sulfur carrier)-H + 5'-deoxyadenosine + L-methionine + A + S-adenosyl-L-homocysteine + 2 H(+). Its function is as follows. Catalyzes the methylthiolation of N6-(dimethylallyl)adenosine (i(6)A), leading to the formation of 2-methylthio-N6-(dimethylallyl)adenosine (ms(2)i(6)A) at position 37 in tRNAs that read codons beginning with uridine. This chain is tRNA-2-methylthio-N(6)-dimethylallyladenosine synthase, found in Marinomonas sp. (strain MWYL1).